Consider the following 295-residue polypeptide: Bifunctional protein FolD (295 aa).

NADP(+) is bound by residues 169-171, Thr-196, and Val-237; that span reads GRG.

It belongs to the tetrahydrofolate dehydrogenase/cyclohydrolase family. Homodimer.

The enzyme catalyses (6R)-5,10-methylene-5,6,7,8-tetrahydrofolate + NADP(+) = (6R)-5,10-methenyltetrahydrofolate + NADPH. The catalysed reaction is (6R)-5,10-methenyltetrahydrofolate + H2O = (6R)-10-formyltetrahydrofolate + H(+). It participates in one-carbon metabolism; tetrahydrofolate interconversion. Functionally, catalyzes the oxidation of 5,10-methylenetetrahydrofolate to 5,10-methenyltetrahydrofolate and then the hydrolysis of 5,10-methenyltetrahydrofolate to 10-formyltetrahydrofolate. The protein is Bifunctional protein FolD of Kineococcus radiotolerans (strain ATCC BAA-149 / DSM 14245 / SRS30216).